A 95-amino-acid chain; its full sequence is MTVKCKAEESLTCSCVDVGTIIDGSDCSVEVHQFYSTEADANAVLERLTKKARNTESDPCEIKSEIVAVENGVQLNASFTFSCQAEAMIFELANR.

Belongs to the UPF0381 family.

The chain is UPF0381 protein HI_0400 from Haemophilus influenzae (strain ATCC 51907 / DSM 11121 / KW20 / Rd).